The sequence spans 437 residues: Phosphomethylpyrimidine synthase (437 aa).

Substrate-binding positions include Asn-69, Met-98, Tyr-127, His-163, 185-187 (SRG), 226-229 (DACR), and Glu-265. His-269 is a Zn(2+) binding site. Tyr-292 is a substrate binding site. His-333 provides a ligand contact to Zn(2+). Residues Cys-409, Cys-412, and Cys-416 each contribute to the [4Fe-4S] cluster site.

This sequence belongs to the ThiC family. [4Fe-4S] cluster is required as a cofactor.

The enzyme catalyses 5-amino-1-(5-phospho-beta-D-ribosyl)imidazole + S-adenosyl-L-methionine = 4-amino-2-methyl-5-(phosphooxymethyl)pyrimidine + CO + 5'-deoxyadenosine + formate + L-methionine + 3 H(+). The protein operates within cofactor biosynthesis; thiamine diphosphate biosynthesis. Catalyzes the synthesis of the hydroxymethylpyrimidine phosphate (HMP-P) moiety of thiamine from aminoimidazole ribotide (AIR) in a radical S-adenosyl-L-methionine (SAM)-dependent reaction. This Clostridium botulinum (strain 657 / Type Ba4) protein is Phosphomethylpyrimidine synthase.